The sequence spans 489 residues: 3-octaprenyl-4-hydroxybenzoate carboxy-lyase (489 aa).

Residue Asn-172 participates in Mn(2+) binding. Residues 175 to 177, 189 to 191, and 194 to 195 contribute to the prenylated FMN site; these read IYR, RWL, and RG. A Mn(2+)-binding site is contributed by Glu-238. Asp-287 acts as the Proton donor in catalysis.

Belongs to the UbiD family. In terms of assembly, homohexamer. Prenylated FMN serves as cofactor. It depends on Mn(2+) as a cofactor.

It is found in the cell membrane. The enzyme catalyses a 4-hydroxy-3-(all-trans-polyprenyl)benzoate + H(+) = a 2-(all-trans-polyprenyl)phenol + CO2. It functions in the pathway cofactor biosynthesis; ubiquinone biosynthesis. Its function is as follows. Catalyzes the decarboxylation of 3-octaprenyl-4-hydroxy benzoate to 2-octaprenylphenol, an intermediate step in ubiquinone biosynthesis. In Tolumonas auensis (strain DSM 9187 / NBRC 110442 / TA 4), this protein is 3-octaprenyl-4-hydroxybenzoate carboxy-lyase.